We begin with the raw amino-acid sequence, 79 residues long: Short neurotoxin 7 (79 aa).

The N-terminal stretch at 1-21 is a signal peptide; sequence MKTLLLTLVMVTIMCLDLGYT. 4 disulfides stabilise this stretch: Cys24–Cys41, Cys34–Cys59, Cys63–Cys71, and Cys72–Cys77.

This sequence belongs to the three-finger toxin family. Short-chain subfamily. Type III alpha-neurotoxin sub-subfamily. In terms of tissue distribution, expressed by the venom gland.

Its subcellular location is the secreted. Its function is as follows. Binds with high affinity to muscle nicotinic acetylcholine receptor (nAChR) and hinders acetylcholine binding to the receptor, thereby impairing neuromuscular transmission. Competes with the binding of alpha-bungarotoxin on muscle AChR (from Torpedo) (IC(50)=0.30 uM). In vivo, causes muscle paralysis, spasms and increased respiration. The polypeptide is Short neurotoxin 7 (Pseudonaja textilis (Eastern brown snake)).